The sequence spans 514 residues: FAD-dependent monooxygenase AacuC (514 aa).

The segment at 1–29 (MVSNEYLTHGDKDEFDPAKWSSTPGELPP) is disordered. A compositionally biased stretch (basic and acidic residues) spans 8-17 (THGDKDEFDP). 2 residues coordinate FAD: valine 79 and arginine 146. Residue arginine 227 is part of the active site. Aspartate 358 and glycine 371 together coordinate FAD.

This sequence belongs to the paxM FAD-dependent monooxygenase family. It depends on FAD as a cofactor.

It participates in secondary metabolite biosynthesis. FAD-dependent monooxygenase; part of the gene cluster that mediates the biosynthesis of the tetrahydroxanthone dimer secalonic acid D. The pathway begins with the synthesis of atrochrysone thioester by the polyketide synthase AacuL. The atrochrysone carboxyl ACP thioesterase AacuM then breaks the thioester bond and releases the atrochrysone carboxylic acid from AacuL. Atrochrysone carboxylic acid is decarboxylated by the decarboxylase AacuI, and oxidized by the anthrone oxygenase AacuG to yield emodin. Emodin is then reduced to emodin hydroquinone by a yet unidentified oxidoreductase. A-ring reduction by the short chain dehydrogenase AacuN, dehydration by the scytalone dehydratase-like protein AacuK and probable spontaneous re-oxidation, results in overall deoxygenation to chrysophanol. Baeyer-Villiger oxidation by the Baeyer-Villiger monooxygenase (BVMO) AacuH then yields monodictyphenone. Monodictyphenone is transformed into compounds with the tetrahydroxanthone skeleton via methylesterification by the methyltransferase AacuQ, followed by the action of the flavin-dependent monooxygenase AacuC, the isomerase AacuP, and the short chain dehydrogenase/reductase AacuF or AacuD. AacuF and AacuD should accept the same compound as a substrate but perform the ketoreduction with a different stereoselectivity, thus yielding blennolides B and A, respectively. In the final step of the biosynthesis, the cytochrome P450 monooxygenase AacuE accepts blennolide B and/or blennolide A to conduct the dimerization reaction to furnish the tetrahydroxanthone dimers, secalonic acids D, B, and F. This is FAD-dependent monooxygenase AacuC from Aspergillus aculeatus (strain ATCC 16872 / CBS 172.66 / WB 5094).